The primary structure comprises 369 residues: MLMKTTTVHAPASQGTSGIVLDSLRVAYHGNVVLKPLSLTIEPGEVLALIGPSGSGKTTVLRAVAGFVQPAGGRILIGDTDVTHLPPYKRGLAMVVQNYALFPHLKVEDNVAFGLRAQKQPKALINERVTQALKTVGMSDYAARYPHQLSGGQQQRVAIARAIAVRPRVLLLDEPLSALDAQIRHNMVEEIARLHRELPELTILYVTHDQTEALTLADKIGIMKDGSLIAHGETRALYQHPPNRFAAEFLGRANILSAIALGITEAPGLVDVSCGGAVIRAFSRGSHHGYNKLLCIRPQHLSLTPRSAYSNRFNATLQSVHWQGDLTHLLCDVAGETVRMVLTHVNPLPRVGDKLALWFEPDDAVLIEV.

The ABC transporter domain maps to 19–250 (IVLDSLRVAY…PPNRFAAEFL (232 aa)). Residue 51–58 (GPSGSGKT) coordinates ATP.

Belongs to the ABC transporter superfamily. 2-aminoethylphosphonate importer (TC 3.A.1.11.5) family.

The protein resides in the cell inner membrane. Its function is as follows. Probably part of the PhnSTUV complex (TC 3.A.1.11.5) involved in 2-aminoethylphosphonate import. Probably responsible for energy coupling to the transport system. This Salmonella typhimurium (strain LT2 / SGSC1412 / ATCC 700720) protein is Putative 2-aminoethylphosphonate import ATP-binding protein PhnT (phnT).